We begin with the raw amino-acid sequence, 129 residues long: HTH-type transcriptional regulator HmrR (129 aa).

The HTH merR-type domain occupies 1–68 (MNIGEASERS…VEECRQLLAL (68 aa)). A DNA-binding region (H-T-H motif) is located at residues 4-23 (GEASERSGLPSKTIRYYEDI).

In terms of assembly, homodimer.

The protein resides in the cytoplasm. Functionally, regulates the transcription of actP. It detects cytoplasmic copper stress and activates transcription in response to increasing copper concentrations. In the absence of copper, it negatively regulates the transcription of actP. The sequence is that of HTH-type transcriptional regulator HmrR (hmrR) from Rhizobium leguminosarum bv. viciae.